We begin with the raw amino-acid sequence, 229 residues long: PKHD-type hydroxylase RPA3479 (229 aa).

The Fe2OG dioxygenase domain maps to 78–180 (QIFPPLFNRY…RVASFFWLQS (103 aa)). Positions 98, 100, and 161 each coordinate Fe cation. Arginine 171 serves as a coordination point for 2-oxoglutarate.

Requires Fe(2+) as cofactor. The cofactor is L-ascorbate.

This is PKHD-type hydroxylase RPA3479 from Rhodopseudomonas palustris (strain ATCC BAA-98 / CGA009).